The sequence spans 115 residues: T cell receptor beta variable 18 (115 aa).

The signal sequence occupies residues 1–21 (MDTRLLCCAVICLLGAGLSNA). The Ig-like domain maps to 22 to 115 (GVMQNPRHLV…SAAYFCASSP (94 aa)). Cysteines 42 and 111 form a disulfide.

Alpha-beta TR is a heterodimer composed of an alpha and beta chain; disulfide-linked. The alpha-beta TR is associated with the transmembrane signaling CD3 coreceptor proteins to form the TR-CD3 (TcR or TCR). The assembly of alpha-beta TR heterodimers with CD3 occurs in the endoplasmic reticulum where a single alpha-beta TR heterodimer associates with one CD3D-CD3E heterodimer, one CD3G-CD3E heterodimer and one CD247 homodimer forming a stable octameric structure. CD3D-CD3E and CD3G-CD3E heterodimers preferentially associate with TR alpha and TR beta chains, respectively. The association of the CD247 homodimer is the last step of TcR assembly in the endoplasmic reticulum and is required for transport to the cell surface.

Its subcellular location is the cell membrane. Functionally, v region of the variable domain of T cell receptor (TR) beta chain that participates in the antigen recognition. Alpha-beta T cell receptors are antigen specific receptors which are essential to the immune response and are present on the cell surface of T lymphocytes. Recognize peptide-major histocompatibility (MH) (pMH) complexes that are displayed by antigen presenting cells (APC), a prerequisite for efficient T cell adaptive immunity against pathogens. Binding of alpha-beta TR to pMH complex initiates TR-CD3 clustering on the cell surface and intracellular activation of LCK that phosphorylates the ITAM motifs of CD3G, CD3D, CD3E and CD247 enabling the recruitment of ZAP70. In turn ZAP70 phosphorylates LAT, which recruits numerous signaling molecules to form the LAT signalosome. The LAT signalosome propagates signal branching to three major signaling pathways, the calcium, the mitogen-activated protein kinase (MAPK) kinase and the nuclear factor NF-kappa-B (NF-kB) pathways, leading to the mobilization of transcription factors that are critical for gene expression and essential for T cell growth and differentiation. The T cell repertoire is generated in the thymus, by V-(D)-J rearrangement. This repertoire is then shaped by intrathymic selection events to generate a peripheral T cell pool of self-MH restricted, non-autoaggressive T cells. Post-thymic interaction of alpha-beta TR with the pMH complexes shapes TR structural and functional avidity. This Homo sapiens (Human) protein is T cell receptor beta variable 18.